A 137-amino-acid chain; its full sequence is Large ribosomal subunit protein uL16 (137 aa).

Belongs to the universal ribosomal protein uL16 family. In terms of assembly, part of the 50S ribosomal subunit.

Its function is as follows. Binds 23S rRNA and is also seen to make contacts with the A and possibly P site tRNAs. The chain is Large ribosomal subunit protein uL16 from Streptococcus agalactiae serotype Ia (strain ATCC 27591 / A909 / CDC SS700).